A 488-amino-acid polypeptide reads, in one-letter code: uncharacterized protein (488 aa).

The protein belongs to the protein kinase superfamily. ADCK protein kinase family.

This is an uncharacterized protein from Mycobacterium tuberculosis (strain CDC 1551 / Oshkosh).